Here is a 705-residue protein sequence, read N- to C-terminus: Elongation factor G (705 aa).

The tr-type G domain maps to 7–287; it reads HLTRNIGIMA…YVCAFLPSPL (281 aa). Residues 16–23, 84–88, and 138–141 contribute to the GTP site; these read AHIDAGKT, DTPGH, and NKMD. The tract at residues 293–312 is disordered; it reads VGTNPTTGAEEDRKPSEDEK. Over residues 302–312 the composition is skewed to basic and acidic residues; the sequence is EEDRKPSEDEK.

The protein belongs to the TRAFAC class translation factor GTPase superfamily. Classic translation factor GTPase family. EF-G/EF-2 subfamily.

It is found in the cytoplasm. Functionally, catalyzes the GTP-dependent ribosomal translocation step during translation elongation. During this step, the ribosome changes from the pre-translocational (PRE) to the post-translocational (POST) state as the newly formed A-site-bound peptidyl-tRNA and P-site-bound deacylated tRNA move to the P and E sites, respectively. Catalyzes the coordinated movement of the two tRNA molecules, the mRNA and conformational changes in the ribosome. The polypeptide is Elongation factor G (Phocaeicola vulgatus (strain ATCC 8482 / DSM 1447 / JCM 5826 / CCUG 4940 / NBRC 14291 / NCTC 11154) (Bacteroides vulgatus)).